The sequence spans 485 residues: Tektin-5 (485 aa).

Coiled coils occupy residues 114–185 (RLTD…EVNC), 225–247 (QEQM…DAQH), 307–385 (QNMR…MAKE), and 421–444 (TIDD…QLLV).

It belongs to the tektin family. Microtubule inner protein component of sperm flagellar doublet microtubules. Interacts with TEKT3. Post-translationally, ubiquitinated, leading to its degradation. Deubiquitinated by USP16, promoting its stability.

The protein resides in the cytoplasm. Its subcellular location is the cytoskeleton. It is found in the flagellum axoneme. In terms of biological role, sperm-specific microtubule inner protein (MIP) part of the dynein-decorated doublet microtubules (DMTs) in flagellar axoneme. Forms an extensive interaction network in different conformations that reinforces the helix bundle composed by other tektin proteins (TEKT1 to TEKT4) and MIPs to anchor the tektin bundle onto the tubulin wall of A-tubule of the sperm flagellum. This is Tektin-5 (TEKT5) from Homo sapiens (Human).